The following is a 169-amino-acid chain: MICOS complex subunit MIC19 (169 aa).

G2 carries the N-myristoyl glycine lipid modification. The CHCH domain maps to 123–165 (ENVCQDNENEIVRCLQENPGRVLKCAPLTEAFEKCVGEFRQQV). 2 short sequence motifs (cx9C motif) span residues 126–136 (CQDNENEIVRC) and 147–157 (CAPLTEAFEKC). Disulfide bonds link C126-C157 and C136-C147.

Belongs to the MICOS complex subunit Mic19 family. Metazoan Mic19 subfamily. Component of the mitochondrial contact site and cristae organizing system (MICOS) complex.

It localises to the mitochondrion inner membrane. Its function is as follows. Plays a role in maintaining mitochondrial morphology. May act as a component of the MICOS complex, a large protein complex of the mitochondria. The protein is MICOS complex subunit MIC19 of Caenorhabditis elegans.